Here is a 550-residue protein sequence, read N- to C-terminus: Hydroxylamine reductase (550 aa).

[2Fe-2S] cluster is bound by residues cysteine 3, cysteine 6, cysteine 18, and cysteine 25. The hybrid [4Fe-2O-2S] cluster site is built by histidine 249, glutamate 273, cysteine 317, cysteine 405, cysteine 433, cysteine 458, glutamate 492, and lysine 494. Cysteine 405 is subject to Cysteine persulfide.

The protein belongs to the HCP family. [2Fe-2S] cluster serves as cofactor. Requires hybrid [4Fe-2O-2S] cluster as cofactor.

It is found in the cytoplasm. It catalyses the reaction A + NH4(+) + H2O = hydroxylamine + AH2 + H(+). Its function is as follows. Catalyzes the reduction of hydroxylamine to form NH(3) and H(2)O. The polypeptide is Hydroxylamine reductase (Salmonella gallinarum (strain 287/91 / NCTC 13346)).